Here is a 231-residue protein sequence, read N- to C-terminus: MAETLAHRFTEFLLESNALKFGDFTLKSGRKSPYFINAGAFDDGKKIAALGAFYAEKISQAIVHNTIPRNIDTVFGPAYKGIPLAVSTAIALTAGHNMTVGYTFDRKEKKDHGDGGWMVGTPLTDGMKVLLVDDVMTAGTAVREVIPKLKAEANVEVVGLVLSVDRMEKTKDSDMSAVKAVEAEFGFPVLSIANVREIFDAAAKMKNPDGTPLLSHDIQQRAAAYLEEYGA.

5-phospho-alpha-D-ribose 1-diphosphate is bound by residues Lys-27, 79–80 (YK), Arg-106, Lys-107, Lys-110, His-112, and 133–141 (DDVMTAGTA). Orotate-binding residues include Thr-137 and Arg-166.

It belongs to the purine/pyrimidine phosphoribosyltransferase family. PyrE subfamily. In terms of assembly, homodimer. The cofactor is Mg(2+).

It catalyses the reaction orotidine 5'-phosphate + diphosphate = orotate + 5-phospho-alpha-D-ribose 1-diphosphate. It participates in pyrimidine metabolism; UMP biosynthesis via de novo pathway; UMP from orotate: step 1/2. Catalyzes the transfer of a ribosyl phosphate group from 5-phosphoribose 1-diphosphate to orotate, leading to the formation of orotidine monophosphate (OMP). In Bifidobacterium longum (strain NCC 2705), this protein is Orotate phosphoribosyltransferase.